The chain runs to 324 residues: N-acetyl-gamma-glutamyl-phosphate reductase (324 aa).

The active site involves Cys131.

It belongs to the NAGSA dehydrogenase family. Type 1 subfamily.

It localises to the cytoplasm. The enzyme catalyses N-acetyl-L-glutamate 5-semialdehyde + phosphate + NADP(+) = N-acetyl-L-glutamyl 5-phosphate + NADPH + H(+). It functions in the pathway amino-acid biosynthesis; L-arginine biosynthesis; N(2)-acetyl-L-ornithine from L-glutamate: step 3/4. Its function is as follows. Catalyzes the NADPH-dependent reduction of N-acetyl-5-glutamyl phosphate to yield N-acetyl-L-glutamate 5-semialdehyde. This is N-acetyl-gamma-glutamyl-phosphate reductase from Bradyrhizobium sp. (strain ORS 278).